A 443-amino-acid chain; its full sequence is Amino-acid acetyltransferase (443 aa).

The N-acetyltransferase domain maps to 296–443 (EQIRRATIND…KSKVLMADLG (148 aa)).

This sequence belongs to the acetyltransferase family. ArgA subfamily. Homohexamer.

The protein localises to the cytoplasm. It carries out the reaction L-glutamate + acetyl-CoA = N-acetyl-L-glutamate + CoA + H(+). It functions in the pathway amino-acid biosynthesis; L-arginine biosynthesis; N(2)-acetyl-L-ornithine from L-glutamate: step 1/4. The polypeptide is Amino-acid acetyltransferase (argA) (Escherichia coli O157:H7).